The sequence spans 170 residues: Co-chaperone protein HscB homolog (170 aa).

The region spanning 5-79 (DHFSLFGLPA…RARYLCEQAG (75 aa)) is the J domain.

This sequence belongs to the HscB family. In terms of assembly, interacts with HscA and stimulates its ATPase activity.

Functionally, co-chaperone involved in the maturation of iron-sulfur cluster-containing proteins. Seems to help targeting proteins to be folded toward HscA. In Bordetella parapertussis (strain 12822 / ATCC BAA-587 / NCTC 13253), this protein is Co-chaperone protein HscB homolog.